Consider the following 97-residue polypeptide: MPSQMEHAMETMMLTFHRFAGDKDHLTKEDLRVLMEREFPGFLENQKDPLAVDKIMKDLDQCRDGKVGFQSFLSLVAGLTIACNDYFVVNMKQKGKK.

An N6-acetyllysine mark is found at Lys-23, Lys-28, Lys-54, and Lys-57. In terms of domain architecture, EF-hand spans 47–82 (KDPLAVDKIMKDLDQCRDGKVGFQSFLSLVAGLTIA). The segment at 60 to 71 (DQCRDGKVGFQS) is ancestral calcium site.

The protein belongs to the S-100 family. Heterotetramer containing 2 light chains of S100A10/p11 and 2 heavy chains of ANXA2/p36. Interacts with SCN10A. Interacts with TASOR.

In terms of biological role, because S100A10 induces the dimerization of ANXA2/p36, it may function as a regulator of protein phosphorylation in that the ANXA2 monomer is the preferred target (in vitro) of tyrosine-specific kinase. The polypeptide is Protein S100-A10 (S100a10) (Mus musculus (Mouse)).